A 3095-amino-acid chain; its full sequence is Centrosome-associated protein 350 (3095 aa).

Disordered stretches follow at residues methionine 1–glutamine 24 and threonine 63–leucine 105. A compositionally biased stretch (polar residues) spans proline 14–glutamine 24. Residues serine 84 and serine 140 each carry the phosphoserine modification. 3 disordered regions span residues aspartate 219 to methionine 239, serine 251 to glutamine 272, and lysine 430 to serine 493. Residues serine 228–asparagine 238 show a composition bias toward polar residues. Residues serine 251 to serine 265 show a composition bias toward low complexity. Basic and acidic residues-rich tracts occupy residues methionine 438–alanine 457 and glycine 464–histidine 476. Residue serine 468 is modified to Phosphoserine. Residues arginine 481–alanine 491 show a composition bias toward low complexity. Serine 503 is modified (phosphoserine). Disordered regions lie at residues glutamine 538–lysine 623 and alanine 671–proline 718. 2 stretches are compositionally biased toward basic and acidic residues: residues tyrosine 587 to lysine 623 and glutamate 690 to glutamate 699. Positions isoleucine 596–threonine 641 form a coiled coil. A Phosphoserine modification is found at serine 691. A compositionally biased stretch (low complexity) spans proline 701–glutamate 714. Residues serine 874 and serine 935 each carry the phosphoserine modification. Positions serine 977 to arginine 996 are disordered. The span at serine 979–serine 988 shows a compositional bias: low complexity. Serine 1057 is modified (phosphoserine). Disordered regions lie at residues tyrosine 1099–leucine 1128 and glutamine 1151–leucine 1265. Residues leucine 1119–leucine 1128 show a composition bias toward polar residues. Low complexity predominate over residues serine 1153–serine 1168. A compositionally biased stretch (basic and acidic residues) spans aspartate 1194–serine 1206. Serine 1200 is modified (phosphoserine). Residues glutamine 1251–leucine 1265 show a composition bias toward low complexity. At threonine 1253 the chain carries Phosphothreonine. Phosphoserine is present on residues serine 1256 and serine 1259. The stretch at isoleucine 1363–valine 1402 forms a coiled coil. Disordered stretches follow at residues alanine 1490–serine 1668, leucine 1720–leucine 1739, lysine 1787–glutamine 1864, and alanine 1893–serine 2017. Positions glutamine 1503–arginine 1513 are enriched in basic and acidic residues. Composition is skewed to low complexity over residues serine 1517–serine 1526 and serine 1536–proline 1545. Over residues lysine 1551–serine 1564 the composition is skewed to basic and acidic residues. Serine 1606 carries the post-translational modification Phosphoserine. Basic and acidic residues predominate over residues glutamate 1624–aspartate 1640. A phosphoserine mark is found at serine 1641 and serine 1646. A coiled-coil region spans residues lysine 1700–glutamate 1793. Residues lysine 1787–leucine 1796 are compositionally biased toward basic and acidic residues. Serine 1812 carries the post-translational modification Phosphoserine. Low complexity predominate over residues glutamate 1819–serine 1835. Composition is skewed to basic and acidic residues over residues serine 1845–glutamine 1864 and tryptophan 1894–glutamine 1915. Positions lysine 1850–alanine 1893 form a coiled coil. At serine 1930 the chain carries Phosphoserine. Low complexity predominate over residues serine 1980–serine 1994. The segment covering glutamate 1999–cysteine 2011 has biased composition (basic and acidic residues). Positions isoleucine 2043–glutamate 2092 form a coiled coil. Position 2108 is a phosphoserine (serine 2108). 4 disordered regions span residues lysine 2116 to alanine 2155, isoleucine 2191 to alanine 2265, leucine 2286 to glutamate 2427, and valine 2440 to glutamate 2471. Residues histidine 2133–arginine 2151 are compositionally biased toward basic and acidic residues. Position 2198 is a phosphoserine (serine 2198). Basic and acidic residues-rich tracts occupy residues serine 2202–leucine 2214 and asparagine 2227–serine 2259. The segment covering leucine 2286–glutamine 2300 has biased composition (polar residues). Residues aspartate 2301–proline 2331 are compositionally biased toward basic and acidic residues. Positions aspartate 2349–serine 2362 are enriched in polar residues. 2 stretches are compositionally biased toward basic and acidic residues: residues isoleucine 2377–serine 2387 and leucine 2395–glutamine 2407. The segment covering threonine 2409–glycine 2420 has biased composition (low complexity). A phosphoserine mark is found at serine 2421 and serine 2450. Positions methionine 2455 to histidine 2465 are enriched in basic and acidic residues. A CAP-Gly domain is found at glycine 2504–proline 2546. Position 2671 is a phosphothreonine (threonine 2671). The stretch at leucine 2700–threonine 2731 forms a coiled coil. The segment at glutamine 2767 to serine 2793 is disordered. Residues leucine 2780–valine 2791 show a composition bias toward polar residues. Phosphoserine occurs at positions 2809 and 2818.

In terms of assembly, part of a ternary complex that contains CEP350, CEP43 and MAPRE1. Interacts (via C-terminus) directly with CEP43 (via N-terminus). Interacts with NR1H3, PPARA, PPARD and PPARG. Interacts directly with microtubules. Interacts with the fusion protein CEP43-FGFR1, and by doing so recruits and activates PI3K and PLC-gamma. Interacts with CYLD. Interacts with CFAP157. Interacts with CEP19 (via C-terminus). Interacts with CEP78; promoting CEP78 localization to centrosome and centriole. Post-translationally, phosphorylated during mitosis.

The protein resides in the cytoplasm. The protein localises to the cytoskeleton. It is found in the microtubule organizing center. Its subcellular location is the centrosome. It localises to the spindle. The protein resides in the nucleus. The protein localises to the centriole. It is found in the cilium basal body. Its function is as follows. Plays an essential role in centriole growth by stabilizing a procentriolar seed composed of at least, SASS6 and CPAP. Required for anchoring microtubules to the centrosomes and for the integrity of the microtubule network. Recruits PPARA to discrete subcellular compartments and thereby modulates PPARA activity. Required for ciliation. The chain is Centrosome-associated protein 350 from Mus musculus (Mouse).